Consider the following 451-residue polypeptide: Hexokinase (451 aa).

Residues 6–445 (QQLFEKVVEI…SGKGAAAIAA (440 aa)) form the Hexokinase domain. The tract at residues 63-195 (NGTETGNFLA…ELNVKCVAVV (133 aa)) is hexokinase small subdomain. 74–79 (DLGGTN) contributes to the ATP binding site. Substrate is bound by residues Ser144, 161 to 162 (TK), 196 to 197 (ND), 222 to 223 (TN), Glu249, and Glu283. A hexokinase large subdomain region spans residues 196–434 (NDTVGTLASC…TRFCLRLSED (239 aa)). ATP is bound by residues 288-289 (GM), 325-329 (TRYLT), and 401-405 (SLYKF).

Belongs to the hexokinase family. As to quaternary structure, monomer.

The enzyme catalyses a D-hexose + ATP = a D-hexose 6-phosphate + ADP + H(+). The catalysed reaction is D-mannose + ATP = D-mannose 6-phosphate + ADP + H(+). It catalyses the reaction D-fructose + ATP = D-fructose 6-phosphate + ADP + H(+). It carries out the reaction D-glucose + ATP = D-glucose 6-phosphate + ADP + H(+). Its pathway is carbohydrate metabolism; hexose metabolism. The protein operates within carbohydrate degradation; glycolysis; D-glyceraldehyde 3-phosphate and glycerone phosphate from D-glucose: step 1/4. Catalyzes the phosphorylation of various hexoses to hexose 6-phosphate. This chain is Hexokinase, found in Schistosoma mansoni (Blood fluke).